The following is a 438-amino-acid chain: Histidinol dehydrogenase (438 aa).

NAD(+) is bound by residues tyrosine 129, glutamine 193, and asparagine 216. Threonine 239, glutamine 261, and histidine 264 together coordinate substrate. 2 residues coordinate Zn(2+): glutamine 261 and histidine 264. Residues glutamate 330 and histidine 331 each act as proton acceptor in the active site. Positions 331, 364, 418, and 423 each coordinate substrate. Residue aspartate 364 coordinates Zn(2+). Histidine 423 lines the Zn(2+) pocket.

This sequence belongs to the histidinol dehydrogenase family. Zn(2+) serves as cofactor.

It catalyses the reaction L-histidinol + 2 NAD(+) + H2O = L-histidine + 2 NADH + 3 H(+). It participates in amino-acid biosynthesis; L-histidine biosynthesis; L-histidine from 5-phospho-alpha-D-ribose 1-diphosphate: step 9/9. Its function is as follows. Catalyzes the sequential NAD-dependent oxidations of L-histidinol to L-histidinaldehyde and then to L-histidine. The polypeptide is Histidinol dehydrogenase (Thermobifida fusca (strain YX)).